The chain runs to 60 residues: Large ribosomal subunit protein uL30 (60 aa).

This sequence belongs to the universal ribosomal protein uL30 family. In terms of assembly, part of the 50S ribosomal subunit.

The chain is Large ribosomal subunit protein uL30 from Shewanella loihica (strain ATCC BAA-1088 / PV-4).